A 358-amino-acid chain; its full sequence is Neuronal-specific septin-3 (358 aa).

Residues 1 to 10 show a composition bias toward basic and acidic residues; the sequence is MSKGLPEART. The tract at residues 1–29 is disordered; that stretch reads MSKGLPEARTDTAMSELVPEPRPKPAVPM. The Septin-type G domain occupies 58-331; sequence TGFDFNIMVV…ETYRAKRLND (274 aa). Residues 68–75 form a G1 motif region; the sequence is GQSGLGKS. GTP is bound at residue 68–75; the sequence is GQSGLGKS. Serine 91 carries the post-translational modification Phosphoserine. Threonine 102 lines the GTP pocket. The tract at residues 125–128 is G3 motif; it reads DTPG. A G4 motif region spans residues 207 to 210; that stretch reads AKAD. GTP-binding positions include 208–216, glycine 265, and arginine 280; that span reads KADTMTLEE.

Belongs to the TRAFAC class TrmE-Era-EngA-EngB-Septin-like GTPase superfamily. Septin GTPase family. In terms of assembly, septins polymerize into heterooligomeric protein complexes that form filaments, and can associate with cellular membranes, actin filaments and microtubules. GTPase activity is required for filament formation. Post-translationally, phosphorylated by PKG on serine residues. Phosphorylated by PKG on Ser-91. As to expression, brain-specific, with highest expression in the hippocampal CA3 region (at protein level).

It is found in the cytoplasm. Its subcellular location is the cytoskeleton. It localises to the synapse. Functionally, filament-forming cytoskeletal GTPase. May play a role in cytokinesis (Potential). This is Neuronal-specific septin-3 from Rattus norvegicus (Rat).